The chain runs to 493 residues: Putative trans-acting regulator SP_1800 (493 aa).

This sequence belongs to the AtxA/AcpA family.

This is Putative trans-acting regulator SP_1800 from Streptococcus pneumoniae serotype 4 (strain ATCC BAA-334 / TIGR4).